The primary structure comprises 544 residues: Elongator complex protein 3 (544 aa).

The region spanning 79-369 (RTASGIAVVA…YRIQRDIPMP (291 aa)) is the Radical SAM core domain. [4Fe-4S] cluster is bound by residues Cys-96, Cys-106, and Cys-109. Acetyl-CoA is bound by residues Lys-161, 472 to 475 (ELHV), 495 to 497 (FGT), and Tyr-528. Residues 393–544 (TKCRDIRARE…LDGPYMSKWL (152 aa)) enclose the N-acetyltransferase domain.

It belongs to the ELP3 family. Component of the elongator complex. The cofactor is [4Fe-4S] cluster.

The protein resides in the cytoplasm. It carries out the reaction uridine(34) in tRNA + acetyl-CoA + S-adenosyl-L-methionine + H2O = 5-(carboxymethyl)uridine(34) in tRNA + 5'-deoxyadenosine + L-methionine + CoA + 2 H(+). It participates in tRNA modification; 5-methoxycarbonylmethyl-2-thiouridine-tRNA biosynthesis. Its function is as follows. Catalytic tRNA acetyltransferase subunit of the elongator complex which is required for multiple tRNA modifications, including mcm5U (5-methoxycarbonylmethyl uridine), mcm5s2U (5-methoxycarbonylmethyl-2-thiouridine), and ncm5U (5-carbamoylmethyl uridine). In the elongator complex, acts as a tRNA uridine(34) acetyltransferase, which mediates formation of carboxymethyluridine in the wobble base at position 34 in tRNAs. The polypeptide is Elongator complex protein 3 (Schizosaccharomyces pombe (strain 972 / ATCC 24843) (Fission yeast)).